A 456-amino-acid chain; its full sequence is MDTEPLLSPLSPSPHLLHPLPEHAEVSTFSPPLSPCPSPASSYKERIIFGAHPPPPPPPPPPPPPPPRGRRYYRRVSGDDLDVPSCSSSPSPPSDEENPPPNPPSLFDFIGGRTNLHRSRTAPAMAPLNAAAIAAAAASGDSRNPPPPPRRPAIVLHAFLFLLAYLAMGVTFYAALPGNFTSSAGPTHPVADALYFCIVTLCTIGYGDITPATPAAKLFSISFVLIGFGFVDILLSGMVSYVLDLQEHLLITALKNPRSVRKHRHNYIFDLKKGRMRVRMKVALALTVVAICVGVGAAVLKRVENLGWLDAVYLAVMSVTTVGYGDHAFRTLAGRLFASAWLLVSTLAVARAFLYLAEMRIDKRHRAMANWVLSRDMTVSEFLAADIDNNGYVTKSEFVVYKLKEMGKISEKDIMMICDQFQRMDSGNCGKITLSDLLESHQLVTDLNEKKKGKKS.

The segment covering 1 to 19 (MDTEPLLSPLSPSPHLLHP) has biased composition (low complexity). Residues 1–112 (MDTEPLLSPL…PPSLFDFIGG (112 aa)) form a disordered region. Residues 1-152 (MDTEPLLSPL…RNPPPPPRRP (152 aa)) lie on the Cytoplasmic side of the membrane. The span at 52-67 (HPPPPPPPPPPPPPPP) shows a compositional bias: pro residues. The helical transmembrane segment at 153-173 (AIVLHAFLFLLAYLAMGVTFY) threads the bilayer. Residues 192-211 (DALYFCIVTLCTIGYGDITP) constitute an intramembrane region (pore-forming). A helical membrane pass occupies residues 223-243 (FVLIGFGFVDILLSGMVSYVL). The Cytoplasmic portion of the chain corresponds to 244–279 (DLQEHLLITALKNPRSVRKHRHNYIFDLKKGRMRVR). The chain crosses the membrane as a helical span at residues 280–300 (MKVALALTVVAICVGVGAAVL). An intramembrane region (pore-forming) is located at residues 310–329 (DAVYLAVMSVTTVGYGDHAF). Residues 336 to 356 (LFASAWLLVSTLAVARAFLYL) traverse the membrane as a helical segment. Residues 357-456 (AEMRIDKRHR…LNEKKKGKKS (100 aa)) are Cytoplasmic-facing. EF-hand domains lie at 373-408 (LSRDMTVSEFLAADIDNNGYVTKSEFVVYKLKEMGK) and 412-447 (KDIMMICDQFQRMDSGNCGKITLSDLLESHQLVTDL). D386, D388, N390, Y392, E397, D425, K431, and D436 together coordinate Ca(2+).

It belongs to the two pore domain potassium channel (TC 1.A.1.7) family. As to quaternary structure, homodimer.

It localises to the membrane. Its function is as follows. Inward-rectifying potassium channel. The chain is Two pore potassium channel c (TPKC) from Oryza sativa subsp. japonica (Rice).